Reading from the N-terminus, the 320-residue chain is Beta-ketoacyl-[acyl-carrier-protein] synthase III (320 aa).

Catalysis depends on residues Cys114 and His247. The segment at Gln248 to Arg252 is ACP-binding. Asn277 is a catalytic residue.

This sequence belongs to the thiolase-like superfamily. FabH family. As to quaternary structure, homodimer.

The protein localises to the cytoplasm. It catalyses the reaction malonyl-[ACP] + acetyl-CoA + H(+) = 3-oxobutanoyl-[ACP] + CO2 + CoA. It functions in the pathway lipid metabolism; fatty acid biosynthesis. Catalyzes the condensation reaction of fatty acid synthesis by the addition to an acyl acceptor of two carbons from malonyl-ACP. Catalyzes the first condensation reaction which initiates fatty acid synthesis and may therefore play a role in governing the total rate of fatty acid production. Possesses both acetoacetyl-ACP synthase and acetyl transacylase activities. Its substrate specificity determines the biosynthesis of branched-chain and/or straight-chain of fatty acids. In Neisseria meningitidis serogroup C (strain 053442), this protein is Beta-ketoacyl-[acyl-carrier-protein] synthase III.